A 115-amino-acid polypeptide reads, in one-letter code: MNMMLILLMNIALAAILISLAFWLPHLNVYTEKANPYECGFDPMSSARLPFSMKFFLVAITFLLFDLEIALLLPLPWAMQFPNMNMLMTMAFILITILALGLAYEWTQKGLEWTE.

A run of 3 helical transmembrane segments spans residues 4 to 24 (MLILLMNIALAAILISLAFWL), 55 to 75 (FFLVAITFLLFDLEIALLLPL), and 86 to 106 (MLMTMAFILITILALGLAYEW).

This sequence belongs to the complex I subunit 3 family. As to quaternary structure, core subunit of respiratory chain NADH dehydrogenase (Complex I) which is composed of 45 different subunits. Interacts with TMEM186. Interacts with TMEM242.

It localises to the mitochondrion inner membrane. The catalysed reaction is a ubiquinone + NADH + 5 H(+)(in) = a ubiquinol + NAD(+) + 4 H(+)(out). Core subunit of the mitochondrial membrane respiratory chain NADH dehydrogenase (Complex I) which catalyzes electron transfer from NADH through the respiratory chain, using ubiquinone as an electron acceptor. Essential for the catalytic activity of complex I. The sequence is that of NADH-ubiquinone oxidoreductase chain 3 from Microtus pennsylvanicus (Meadow vole).